The following is a 550-amino-acid chain: Mycosin-2 (550 aa).

The N-terminal stretch at 1–33 (MASPLNRPGLRAAAASAALTLVALSANVPAAQA) is a signal peptide. Residues 34–62 (IPPPSVDPAMVPADARPGPDQPMRRSNSC) form a disordered region. Residues 79–490 (GFNLVNISKA…YGLVDPVAAL (412 aa)) form the Peptidase S8 domain. Catalysis depends on charge relay system residues D103 and H133. Over residues 168 to 190 (PPVTAAPAPPVEVPPPMPPPPPV) the composition is skewed to pro residues. Residues 168 to 236 (PPVTAAPAPP…PPPPPGAPDG (69 aa)) form a disordered region. The active-site Charge relay system is the S435. Residues 524-544 (NIAIGFVGAVATGVLAMAIGA) form a helical membrane-spanning segment.

Belongs to the peptidase S8 family.

It is found in the cell membrane. This is Mycosin-2 from Mycobacterium tuberculosis (strain ATCC 25618 / H37Rv).